Here is a 215-residue protein sequence, read N- to C-terminus: 2-phospho-L-lactate guanylyltransferase (215 aa).

It belongs to the CofC family. Homodimer.

The enzyme catalyses (2S)-2-phospholactate + GTP + H(+) = (2S)-lactyl-2-diphospho-5'-guanosine + diphosphate. The protein operates within cofactor biosynthesis; coenzyme F420 biosynthesis. Functionally, guanylyltransferase that catalyzes the activation of (2S)-2-phospholactate (2-PL) as (2S)-lactyl-2-diphospho-5'-guanosine, via the condensation of 2-PL with GTP. It is involved in the biosynthesis of coenzyme F420, a hydride carrier cofactor. In Methanoculleus marisnigri (strain ATCC 35101 / DSM 1498 / JR1), this protein is 2-phospho-L-lactate guanylyltransferase.